The primary structure comprises 155 residues: NADPH-dependent 7-cyano-7-deazaguanine reductase (155 aa).

The Thioimide intermediate role is filled by Cys52. Asp59 functions as the Proton donor in the catalytic mechanism. Substrate contacts are provided by residues 74–76 and 93–94; these read VES and HE.

It belongs to the GTP cyclohydrolase I family. QueF type 1 subfamily.

It localises to the cytoplasm. The catalysed reaction is 7-aminomethyl-7-carbaguanine + 2 NADP(+) = 7-cyano-7-deazaguanine + 2 NADPH + 3 H(+). It participates in tRNA modification; tRNA-queuosine biosynthesis. Its function is as follows. Catalyzes the NADPH-dependent reduction of 7-cyano-7-deazaguanine (preQ0) to 7-aminomethyl-7-deazaguanine (preQ1). The protein is NADPH-dependent 7-cyano-7-deazaguanine reductase of Syntrophobacter fumaroxidans (strain DSM 10017 / MPOB).